The chain runs to 52 residues: MASKNREIIKLKSTESSEMYWTVKNKRKTTGRLELKKYDRKLRKHVIFKEAK.

This sequence belongs to the bacterial ribosomal protein bL33 family.

The sequence is that of Large ribosomal subunit protein bL33 (rpmG) from Chlamydia muridarum (strain MoPn / Nigg).